A 122-amino-acid chain; its full sequence is Large ribosomal subunit protein bL12 (122 aa).

It belongs to the bacterial ribosomal protein bL12 family. Homodimer. Part of the ribosomal stalk of the 50S ribosomal subunit. Forms a multimeric L10(L12)X complex, where L10 forms an elongated spine to which 2 to 4 L12 dimers bind in a sequential fashion. Binds GTP-bound translation factors.

Functionally, forms part of the ribosomal stalk which helps the ribosome interact with GTP-bound translation factors. Is thus essential for accurate translation. This Bdellovibrio bacteriovorus (strain ATCC 15356 / DSM 50701 / NCIMB 9529 / HD100) protein is Large ribosomal subunit protein bL12.